The sequence spans 1151 residues: PPi-type phosphoenolpyruvate carboxykinase 1 (1151 aa).

Residues 1083 to 1129 adopt a coiled-coil conformation; that stretch reads RQKLEVAKLNKDLAYLNKTIAEKPRLAETLNKQIAAVKEELQYVSSE.

The protein belongs to the PPi-type phosphoenolpyruvate carboxykinase family. In terms of assembly, monomer and trimer; forms heterotrimers with PEPCK2 and PEPCK3.

It localises to the cytoplasm. Its subcellular location is the cytosol. It carries out the reaction oxaloacetate + diphosphate = phosphoenolpyruvate + phosphate + CO2. In terms of biological role, inorganic pyrophosphate (PPi)-dependent phosphoenolpyruvate carboxykinase, which regulates the carbon flow of the central metabolism by fixing CO(2) to phosphoenolpyruvate to produce oxaloacetate. Can also produce pyruvate and diphosphate from phosphoenolpyruvate and phosphate. This is PPi-type phosphoenolpyruvate carboxykinase 1 from Entamoeba histolytica (strain ATCC 30459 / HM-1:IMSS / ABRM).